A 573-amino-acid polypeptide reads, in one-letter code: Dilute domain-containing protein SPAC25B8.08 (573 aa).

The 285-residue stretch at Asn-180–Glu-464 folds into the Dilute domain.

The protein localises to the cytoplasm. The protein resides in the golgi apparatus. This chain is Dilute domain-containing protein SPAC25B8.08, found in Schizosaccharomyces pombe (strain 972 / ATCC 24843) (Fission yeast).